The sequence spans 52 residues: uncharacterized protein (52 aa).

A helical membrane pass occupies residues 21–40 (VAMNSYVELLFLSVPLIHIF).

The protein localises to the cell membrane. This is an uncharacterized protein from Bacillus subtilis (strain 168).